The sequence spans 592 residues: Sodium- and chloride-dependent transporter XTRP3 (592 aa).

Over 1 to 5 (MEKAR) the chain is Cytoplasmic. A helical transmembrane segment spans residues 6–26 (PLWANSLQFVFACISYAVGLG). Topologically, residues 27 to 42 (NVWRFPYLCQMYGGGS) are extracellular. A helical transmembrane segment spans residues 43-63 (FLVPYIIMLIVEGMPLLYLEL). Topologically, residues 64–79 (AVGQRMRQGSIGAWRT) are cytoplasmic. Residues 80 to 100 (ISPYLSGVGVASVVVSFFLSM) form a helical membrane-spanning segment. Residues 101–165 (YYNVINAWAF…ISPSLQENGG (65 aa)) lie on the Extracellular side of the membrane. N-linked (GlcNAc...) asparagine glycosylation occurs at asparagine 131. The helical transmembrane segment at 166-186 (VQWEPALCLLLAWLVVYLCIL) threads the bilayer. Residues 187–194 (RGTESTGK) lie on the Cytoplasmic side of the membrane. Residues 195–215 (VVYFTASLPYCVLIIYLIRGL) form a helical membrane-spanning segment. Over 216–241 (TLHGATNGLMYMFTPKIEQLANPKAW) the chain is Extracellular. Residues 242–262 (INAATQIFFSLGLGFGSLIAF) form a helical membrane-spanning segment. Over 263–276 (ASYNEPSNNCQKHA) the chain is Cytoplasmic. A helical membrane pass occupies residues 277–297 (IIVSLINSFTSIFASIVTFSI). Topologically, residues 298-389 (YGFKATFNYE…EAIKNMEVSQ (92 aa)) are extracellular. Asparagine 357 carries an N-linked (GlcNAc...) asparagine glycan. Residues 390 to 410 (LWSVLYFFMLLMLGIGSMLGN) traverse the membrane as a helical segment. Over 411–431 (TAAILTPLTDSKIISSHLPKE) the chain is Cytoplasmic. A helical membrane pass occupies residues 432-452 (AISGLVCLVNCAIGMVFTMEA). The Extracellular segment spans residues 453-465 (GNYWFDIFNDYAA). A helical membrane pass occupies residues 466-486 (TLSLLLIVLVETIAVCYVYGL). The Cytoplasmic segment spans residues 487–504 (RRFESDLKAMTGRAVSWY). Residues 505 to 525 (WKVMWAGVSPLLIVSLFVFYL) traverse the membrane as a helical segment. Topologically, residues 526–554 (SDYILTGTLKYQAWDASQGQLVTKDYPAY) are extracellular. A helical transmembrane segment spans residues 555–575 (ALAVIGLLVASSTMCIPLAAL). The Cytoplasmic portion of the chain corresponds to 576–592 (GTFVQRRLKRGDADPVA).

Belongs to the sodium:neurotransmitter symporter (SNF) (TC 2.A.22) family. SLC6A20 subfamily. As to expression, kidney and small intestine. Expressed in the S3 segment of the proximal tubule. Expressed in neurons.

It is found in the apical cell membrane. The enzyme catalyses L-proline(out) + chloride(out) + 2 Na(+)(out) = L-proline(in) + chloride(in) + 2 Na(+)(in). It carries out the reaction L-pipecolate(out) + chloride(out) + 2 Na(+)(out) = L-pipecolate(in) + chloride(in) + 2 Na(+)(in). The catalysed reaction is sarcosine(out) + chloride(out) + 2 Na(+)(out) = sarcosine(in) + chloride(in) + 2 Na(+)(in). It catalyses the reaction N-methyl-L-proline(out) + chloride(out) + 2 Na(+)(out) = N-methyl-L-proline(in) + chloride(in) + 2 Na(+)(in). The enzyme catalyses 2-methyl-2-(methylamino)propanoate(out) + chloride(out) + 2 Na(+)(out) = 2-methyl-2-(methylamino)propanoate(in) + chloride(in) + 2 Na(+)(in). It carries out the reaction glycine betaine(out) + chloride(out) + 2 Na(+)(out) = glycine betaine(in) + chloride(in) + 2 Na(+)(in). The catalysed reaction is glycine(out) + chloride(out) + 2 Na(+)(out) = glycine(in) + chloride(in) + 2 Na(+)(in). In terms of biological role, mediates the Na(+)- and Cl(-)-dependent uptake of imino acids such as L-proline, N-methyl-L-proline and pipecolate as well as N-methylated amino acids. Also transports glycine, regulates proline and glycine homeostasis in the brain playing a role in the modulation of NMDAR currents. The protein is Sodium- and chloride-dependent transporter XTRP3 of Homo sapiens (Human).